The primary structure comprises 426 residues: Synaptotagmin-13 (426 aa).

Residues 1 to 6 are Vesicular-facing; sequence MVLSVP. The helical transmembrane segment at 7 to 29 threads the bilayer; the sequence is VIALGATLGTATSILALCGVTCL. Topologically, residues 30–426 are cytoplasmic; sequence CRHMHPKKGL…QIAMWHQLHL (397 aa). C2 domains follow at residues 158–275 and 287–422; these read QAPK…AQWG and GAGE…AMWH.

It belongs to the synaptotagmin family. In terms of assembly, interacts with NRXN1. Expressed in brain, pancreas and kidney.

Its subcellular location is the membrane. Functionally, may be involved in transport vesicle docking to the plasma membrane. This Homo sapiens (Human) protein is Synaptotagmin-13 (SYT13).